The chain runs to 111 residues: Putative single-stranded DNA-binding protein ycf41 (111 aa).

Residues 1 to 98 enclose the SSB domain; it reads MNSCTLLVQI…FSTSRIFKYK (98 aa).

Its subcellular location is the plastid. The protein resides in the chloroplast. This is Putative single-stranded DNA-binding protein ycf41 (ycf41) from Pyropia yezoensis (Susabi-nori).